The sequence spans 229 residues: UPF0441 protein YE3666 (229 aa).

Disordered regions lie at residues 101–125 (PAQAGMVPTSSSSSETTAAAPQQSG) and 190–229 (KPAVTNTITRGGFGESVAKQSSMQRSAATSSKTSTRSMGG). Low complexity-rich tracts occupy residues 109–120 (TSSSSSETTAAA) and 214–229 (RSAATSSKTSTRSMGG).

The protein belongs to the UPF0441 family.

The polypeptide is UPF0441 protein YE3666 (Yersinia enterocolitica serotype O:8 / biotype 1B (strain NCTC 13174 / 8081)).